The sequence spans 132 residues: ATP synthase epsilon chain (132 aa).

Belongs to the ATPase epsilon chain family. In terms of assembly, F-type ATPases have 2 components, CF(1) - the catalytic core - and CF(0) - the membrane proton channel. CF(1) has five subunits: alpha(3), beta(3), gamma(1), delta(1), epsilon(1). CF(0) has four main subunits: a, b, b' and c.

It localises to the cellular chromatophore membrane. Its function is as follows. Produces ATP from ADP in the presence of a proton gradient across the membrane. The polypeptide is ATP synthase epsilon chain (atpC) (Rhodobacter capsulatus (Rhodopseudomonas capsulata)).